Reading from the N-terminus, the 675-residue chain is Calcium channel YVC1 (675 aa).

8 helical membrane-spanning segments follow: residues 244–264 (ILEI…VNTH), 271–291 (IDFF…DEFI), 301–321 (LGFW…AVCF), 355–375 (LLLF…LKTM), 380–400 (ILFF…FIGL), 440–460 (VLYY…LIAL), 495–515 (LYVP…WFVS), and 518–538 (TWKN…LAYI). Positions 644-675 (YEVIEKIDKLTNLLEVVVAENKELKKRLENKA) form a coiled coil.

Belongs to the transient receptor (TC 1.A.4) family.

It localises to the vacuole membrane. Vacuolar calcium channel involved in the release of calcium ions from the vacuole in response to hyperosmotic or alkaline stress. Required for activation of CAP1-related transcription of oxidative stress response (OSR) genes, but also for maintaining the stability of both the mitochondria and the vacuole in a potassium- and calcium-dependent manner. Contributes to pathogenicity. Plays a key role in hyphal polarized growth and re-orientation to host-signals through its contribution to the localization of the Spitzenkoerper to the hyphal tips. This is Calcium channel YVC1 (YVC1) from Candida albicans (strain SC5314 / ATCC MYA-2876) (Yeast).